Reading from the N-terminus, the 242-residue chain is Uridylate kinase (242 aa).

12 to 15 is an ATP binding site; the sequence is KLSG. Residues 20–25 are involved in allosteric activation by GTP; that stretch reads GEKGYG. Residue Gly55 participates in UMP binding. Residues Gly56 and Arg60 each coordinate ATP. UMP is bound by residues Asp75 and 136–143; that span reads TGNPYFST. Positions 169 and 172 each coordinate ATP.

The protein belongs to the UMP kinase family. As to quaternary structure, homohexamer.

It localises to the cytoplasm. It catalyses the reaction UMP + ATP = UDP + ADP. Its pathway is pyrimidine metabolism; CTP biosynthesis via de novo pathway; UDP from UMP (UMPK route): step 1/1. With respect to regulation, allosterically activated by GTP. Inhibited by UTP. Functionally, catalyzes the reversible phosphorylation of UMP to UDP. The sequence is that of Uridylate kinase from Carboxydothermus hydrogenoformans (strain ATCC BAA-161 / DSM 6008 / Z-2901).